Consider the following 370-residue polypeptide: Polyadenylate-binding protein 4-like (370 aa).

4 consecutive RRM domains span residues 10-88 (ASLY…WSQR), 98-174 (GNVF…RFKN), 190-267 (TNVY…RAQK), and 293-369 (VKLY…LAQR).

Belongs to the polyadenylate-binding protein type-1 family.

May bind RNA. The protein is Polyadenylate-binding protein 4-like (PABPC4L) of Homo sapiens (Human).